The primary structure comprises 382 residues: Phenylalanine dehydrogenase (382 aa).

An NAD(+)-binding site is contributed by Arg-54. Lys-78 contacts L-phenylalanine. Lys-90 functions as the Proton donor/acceptor in the catalytic mechanism. NAD(+) is bound by residues Asp-125, Ser-156, Thr-160, 190 to 196, 213 to 214, 253 to 254, and 274 to 276; these read GLGKVGY, DI, AF, and SAN. Asn-276 contacts L-phenylalanine.

The protein belongs to the Glu/Leu/Phe/Val dehydrogenases family.

It catalyses the reaction L-phenylalanine + NAD(+) + H2O = 3-phenylpyruvate + NH4(+) + NADH + H(+). Activity is not affected by the metal chelating agent EDTA. Addition of 1 mM Mg(2+) results in 15% increase in activity, while the enzyme is strongly inhibited by 1 mM Fe(3+), Fe(2+), Cu(2+), Zn(2+) and Ag(+). Catalyzes the reversible NAD(+)-dependent oxidative deamination of L-phenylalanine to phenylpyruvate. Can also catalyze the oxidative deamination of several other amino acids, with much lower efficiency. Shows activity towards various bulky aromatic alpha-keto acids/esters and (S)-amine alcohols. Can catalyze the amination of 3-(2-chlorophenyl)-2-oxopropionic acid (CPOA) to produce 2-chloro-L-phenylalanine (2-Cl-Phe), a chemical compound used in the pharmaceutical and biotechnology industries. Shows a preference for amination over deamination. The sequence is that of Phenylalanine dehydrogenase from Bacillus thermotolerans (Quasibacillus thermotolerans).